A 366-amino-acid chain; its full sequence is DNA double-strand break repair protein Mre11 (366 aa).

Residues Asp8, His10, Asp49, and Asn84 each coordinate Mn(2+). The active-site Proton donor is His85. 3 residues coordinate Mn(2+): His158, His186, and His188.

It belongs to the MRE11/RAD32 family. In terms of assembly, homodimer. Forms a heterotetramer composed of two Mre11 subunits and two Rad50 subunits. Mn(2+) serves as cofactor.

Its activity is regulated as follows. Nuclease activity is regulated by Rad50. Part of the Rad50/Mre11 complex, which is involved in the early steps of DNA double-strand break (DSB) repair. The complex may facilitate opening of the processed DNA ends to aid in the recruitment of HerA and NurA. Mre11 binds to DSB ends and has both double-stranded 3'-5' exonuclease activity and single-stranded endonuclease activity. The polypeptide is DNA double-strand break repair protein Mre11 (Methanocaldococcus jannaschii (strain ATCC 43067 / DSM 2661 / JAL-1 / JCM 10045 / NBRC 100440) (Methanococcus jannaschii)).